The chain runs to 617 residues: Proline--tRNA ligase (617 aa).

Belongs to the class-II aminoacyl-tRNA synthetase family. ProS type 1 subfamily. In terms of assembly, homodimer.

It localises to the cytoplasm. The catalysed reaction is tRNA(Pro) + L-proline + ATP = L-prolyl-tRNA(Pro) + AMP + diphosphate. Functionally, catalyzes the attachment of proline to tRNA(Pro) in a two-step reaction: proline is first activated by ATP to form Pro-AMP and then transferred to the acceptor end of tRNA(Pro). As ProRS can inadvertently accommodate and process non-cognate amino acids such as alanine and cysteine, to avoid such errors it has two additional distinct editing activities against alanine. One activity is designated as 'pretransfer' editing and involves the tRNA(Pro)-independent hydrolysis of activated Ala-AMP. The other activity is designated 'posttransfer' editing and involves deacylation of mischarged Ala-tRNA(Pro). The misacylated Cys-tRNA(Pro) is not edited by ProRS. The protein is Proline--tRNA ligase of Streptococcus pneumoniae (strain ATCC 700669 / Spain 23F-1).